Reading from the N-terminus, the 354-residue chain is S-adenosylmethionine:tRNA ribosyltransferase-isomerase (354 aa).

It belongs to the QueA family. Monomer.

It localises to the cytoplasm. The catalysed reaction is 7-aminomethyl-7-carbaguanosine(34) in tRNA + S-adenosyl-L-methionine = epoxyqueuosine(34) in tRNA + adenine + L-methionine + 2 H(+). It participates in tRNA modification; tRNA-queuosine biosynthesis. Transfers and isomerizes the ribose moiety from AdoMet to the 7-aminomethyl group of 7-deazaguanine (preQ1-tRNA) to give epoxyqueuosine (oQ-tRNA). This is S-adenosylmethionine:tRNA ribosyltransferase-isomerase from Salmonella newport (strain SL254).